Here is a 115-residue protein sequence, read N- to C-terminus: MNRGVCLCLLMAVLAAGALAQPMPHADPTGPRAQQAEEAPRRQLRAVPRVDDEPRAQLGALLARYIQQARKAPSGRMSVIKNLQSLDPSHRISDRDYMGWMDFGRRSAEEFEYTS.

Positions 1 to 20 are cleaved as a signal peptide; the sequence is MNRGVCLCLLMAVLAAGALA. Positions 21–44 are excised as a propeptide; the sequence is QPMPHADPTGPRAQQAEEAPRRQL. The segment at 21-44 is disordered; sequence QPMPHADPTGPRAQQAEEAPRRQL. Tyrosine 97 carries the sulfotyrosine modification. Phenylalanine 103 carries the phenylalanine amide modification. The propeptide occupies 107–115; the sequence is SAEEFEYTS. A Sulfotyrosine modification is found at tyrosine 113.

The protein belongs to the gastrin/cholecystokinin family. In terms of assembly, binds to CCK-A receptors in the pancreas and CCK-B receptors in the brain. The precursor is cleaved by proteases to produce a number of active cholecystokinins. In terms of processing, the precursor is cleaved by ACE, which removes the Gly-Arg-Arg peptide at the C-terminus, leading to mature hormone.

It is found in the secreted. Functionally, this peptide hormone induces gall bladder contraction and the release of pancreatic enzymes in the gut. Its function in the brain is not clear. Binding to CCK-A receptors stimulates amylase release from the pancreas, binding to CCK-B receptors stimulates gastric acid secretion. This is Cholecystokinin (CCK) from Bos taurus (Bovine).